The primary structure comprises 409 residues: 2,3-bisphosphoglycerate-independent phosphoglycerate mutase 1 (409 aa).

Positions 163-173 (SDADPKVEGKP) are enriched in basic and acidic residues. Residues 163–184 (SDADPKVEGKPPKKIKALDGSP) form a disordered region.

The protein belongs to the BPG-independent phosphoglycerate mutase family. A-PGAM subfamily.

The enzyme catalyses (2R)-2-phosphoglycerate = (2R)-3-phosphoglycerate. It functions in the pathway carbohydrate degradation; glycolysis; pyruvate from D-glyceraldehyde 3-phosphate: step 3/5. Catalyzes the interconversion of 2-phosphoglycerate and 3-phosphoglycerate. In Methanothermobacter thermautotrophicus (strain ATCC 29096 / DSM 1053 / JCM 10044 / NBRC 100330 / Delta H) (Methanobacterium thermoautotrophicum), this protein is 2,3-bisphosphoglycerate-independent phosphoglycerate mutase 1 (apgM1).